The following is a 157-amino-acid chain: Endoribonuclease YbeY (157 aa).

Zn(2+)-binding residues include His118, His122, and His128.

This sequence belongs to the endoribonuclease YbeY family. Zn(2+) is required as a cofactor.

Its subcellular location is the cytoplasm. In terms of biological role, single strand-specific metallo-endoribonuclease involved in late-stage 70S ribosome quality control and in maturation of the 3' terminus of the 16S rRNA. The chain is Endoribonuclease YbeY from Shewanella loihica (strain ATCC BAA-1088 / PV-4).